The following is a 751-amino-acid chain: MRKLCGNGSTSMISTDSYKNTTFFVIAFSTFLISCIDYTKLFSSLSTPEAVGRLEDVLIGQCITKGSFAHTLFLIILSAFFIFQVANFAMSVPRLLDMYRFYTHLLGVPDADIQTLPWPEIVRLIGDIRKHNPVTSLSNGQATALADMVGNDAKAPVKKLDAHDIANRILRQENYLIALFNKDLLDLRVRIPVPHIFTAFIPSSMLILSADPPLPSLQSEPERKFLSFGANHLTKALEWNLRFCLLGYLFDRRGQVRKEFVREKRRKDLVQGLRRRFVFMGILNAIFAPFIILYLLIYSFFRYFEEYHKNPSSIGSRQYTPYAQWKFREFNELPHLFERRLDRSYETAKEYVDQFPKERTALVMRFVAFVAGSFAAVLLVASLIDPDLFLHFEITPHRTVLFYLGVFGSVLAISRGMVPQENMVFDPEASLNEVVRWTHYLPVEWRGQLHSQMVHQEFSKLFALKIMIFFSELLSVILTPFILFFSLPPCAAAIIDFFREFTVHVDGVGYVCSFAVFDFARHGNIDSNRPETGVQGATGPDAGDSGGGGGGGGGGFAAGKSGRQTTRRAASASPSRFKQKDWRSNENKMEQSFLHFKATHPDWQPSDPSSSLFLDRLMGAGARNRPAGGISGSIYGGGGGGGGGGGRGLGIDGSVMAEMEEERLRAKSQSYERAWAKSSHLHRPDISNPLRHPHSAASEIIEEEEGGEGDKGDDSIDGWSKRMKTDGESDDEQEEHGRLWKDDGVQIDIKQ.

Over 1-21 (MRKLCGNGSTSMISTDSYKNT) the chain is Cytoplasmic. The helical transmembrane segment at 22 to 42 (TFFVIAFSTFLISCIDYTKLF) threads the bilayer. Over 43–71 (SSLSTPEAVGRLEDVLIGQCITKGSFAHT) the chain is Lumenal. The helical transmembrane segment at 72-92 (LFLIILSAFFIFQVANFAMSV) threads the bilayer. Residues 93-276 (PRLLDMYRFY…KDLVQGLRRR (184 aa)) lie on the Cytoplasmic side of the membrane. An intramembrane segment occupies 277–297 (FVFMGILNAIFAPFIILYLLI). Topologically, residues 298–365 (YSFFRYFEEY…PKERTALVMR (68 aa)) are cytoplasmic. The chain crosses the membrane as a helical span at residues 366–386 (FVAFVAGSFAAVLLVASLIDP). Topologically, residues 387–398 (DLFLHFEITPHR) are lumenal. The helical transmembrane segment at 399 to 419 (TVLFYLGVFGSVLAISRGMVP) threads the bilayer. Residues 420–465 (QENMVFDPEASLNEVVRWTHYLPVEWRGQLHSQMVHQEFSKLFALK) lie on the Cytoplasmic side of the membrane. The stretch at 466 to 486 (IMIFFSELLSVILTPFILFFS) is an intramembrane region. At 487–751 (LPPCAAAIID…DDGVQIDIKQ (265 aa)) the chain is on the cytoplasmic side. Disordered regions lie at residues 528 to 584 (NRPE…DWRS) and 676 to 751 (AKSS…DIKQ). The segment covering 544-557 (DSGGGGGGGGGGFA) has biased composition (gly residues). A compositionally biased stretch (polar residues) spans 563–576 (RQTTRRAASASPSR). Composition is skewed to basic and acidic residues over residues 708-727 (EGDK…KTDG) and 735-751 (EHGR…DIKQ).

Belongs to the ATG9 family. In terms of assembly, homotrimer; forms a homotrimer with a central pore that forms a path between the two membrane leaflets. Phosphorylated by ATG1. ATG1 phosphorylation is required for preautophagosome elongation.

The protein resides in the preautophagosomal structure membrane. It localises to the cytoplasmic vesicle membrane. It is found in the golgi apparatus membrane. Its subcellular location is the endoplasmic reticulum membrane. It carries out the reaction a 1,2-diacyl-sn-glycero-3-phosphocholine(in) = a 1,2-diacyl-sn-glycero-3-phosphocholine(out). The enzyme catalyses a 1,2-diacyl-sn-glycero-3-phospho-L-serine(in) = a 1,2-diacyl-sn-glycero-3-phospho-L-serine(out). It catalyses the reaction a 1,2-diacyl-sn-glycero-3-phosphoethanolamine(in) = a 1,2-diacyl-sn-glycero-3-phosphoethanolamine(out). The catalysed reaction is a 1,2-diacyl-sn-glycero-3-phospho-(1D-myo-inositol-3-phosphate)(in) = a 1,2-diacyl-sn-glycero-3-phospho-(1D-myo-inositol-3-phosphate)(out). Phospholipid scramblase involved in autophagy and cytoplasm to vacuole transport (Cvt) vesicle formation. Cycles between the preautophagosomal structure/phagophore assembly site (PAS) and the cytoplasmic vesicle pool and supplies membrane for the growing autophagosome. Lipid scramblase activity plays a key role in preautophagosomal structure/phagophore assembly by distributing the phospholipids that arrive through ATG2 from the cytoplasmic to the luminal leaflet of the bilayer, thereby driving autophagosomal membrane expansion. Required for mitophagy. Also involved in endoplasmic reticulum-specific autophagic process and is essential for the survival of cells subjected to severe ER stress. Different machineries are required for anterograde trafficking to the PAS during either the Cvt pathway or bulk autophagy and for retrograde trafficking. The sequence is that of Autophagy-related protein 9 (ATG9) from Cryptococcus gattii (Filobasidiella gattii).